The chain runs to 160 residues: ATP synthase subunit b (160 aa).

Residues 15-35 form a helical membrane-spanning segment; it reads LVIVIGLLFWFLRGFLGGILE.

Belongs to the ATPase B chain family. In terms of assembly, F-type ATPases have 2 components, F(1) - the catalytic core - and F(0) - the membrane proton channel. F(1) has five subunits: alpha(3), beta(3), gamma(1), delta(1), epsilon(1). F(0) has four main subunits: a(1), b(1), b'(1) and c(10-14). The alpha and beta chains form an alternating ring which encloses part of the gamma chain. F(1) is attached to F(0) by a central stalk formed by the gamma and epsilon chains, while a peripheral stalk is formed by the delta, b and b' chains.

It localises to the cellular thylakoid membrane. Functionally, f(1)F(0) ATP synthase produces ATP from ADP in the presence of a proton or sodium gradient. F-type ATPases consist of two structural domains, F(1) containing the extramembraneous catalytic core and F(0) containing the membrane proton channel, linked together by a central stalk and a peripheral stalk. During catalysis, ATP synthesis in the catalytic domain of F(1) is coupled via a rotary mechanism of the central stalk subunits to proton translocation. In terms of biological role, component of the F(0) channel, it forms part of the peripheral stalk, linking F(1) to F(0). In Synechococcus sp. (strain CC9605), this protein is ATP synthase subunit b.